Consider the following 348-residue polypeptide: Dihydroorotase (348 aa).

Zn(2+)-binding residues include His17 and His19. Substrate contacts are provided by residues His19 to Arg21 and Asn45. Residues Lys103, His140, and His178 each contribute to the Zn(2+) site. The residue at position 103 (Lys103) is an N6-carboxylysine. Residue His140 participates in substrate binding. Leu223 serves as a coordination point for substrate. Asp251 serves as a coordination point for Zn(2+). Asp251 is a catalytic residue. Substrate-binding residues include His255 and Ala267.

Belongs to the metallo-dependent hydrolases superfamily. DHOase family. Class II DHOase subfamily. Homodimer. It depends on Zn(2+) as a cofactor.

The catalysed reaction is (S)-dihydroorotate + H2O = N-carbamoyl-L-aspartate + H(+). It participates in pyrimidine metabolism; UMP biosynthesis via de novo pathway; (S)-dihydroorotate from bicarbonate: step 3/3. Functionally, catalyzes the reversible cyclization of carbamoyl aspartate to dihydroorotate. The chain is Dihydroorotase from Escherichia coli O157:H7.